The sequence spans 1388 residues: MASTVSTCQDASPYQPRNYQLEMLEASMKENIIVAMDTGSGKTHIAVLRIKAELDICSPDKVVWFLAPTVALCIQQHEVIASNLPAVRTRTLTGLDKVELWTDQSIWDAVLNGYRVIVSTHAVLADALSHGFVKMSQLALLIFDEAHHCTRRHAANKIMQDFYHPTLTKSGPAAVPRIMGLTASPVVRSNHQELLMVESNLDAVCRTPRLHRQELLKFTHRPHLQQIWYTPTDPAGFRSASLTLGALYHAWENLDIGDDPYIQRLRKSPLDDRALKKALLTGKTYCREQLRRFVDRSRHIFEELGEWAAEYYIYASIKQLRDRVRDSYMSGDWDEAEKAYLVDFLSKIPTSDIHFALNDPDGFRISPKFESLLNFLDSSDQREFSGLIFVKQRVTVSAMTSLLSVHPYTRERFRCAAYVGWSNSSASKDILGDLLNMQLQRDTLDDFRSGRKNLIIATDVLEEGIDLSACSVVVCYDKPPNLKSFIQRRGRARRKQSTFAIMFPTDDTSADVSRWQDLEQAMIEAYQDDERQLQSVSALESLDEEVMERLTGDSTSAVLTADMAMAHLHHFCAVLPPQPYVDMRPVFSFETNEDGLLKGTVILPSCVHPKVRRTEGRRWWRTERAAMKETAFQAYKSLYEFGLVNDHLLPLTKKPELKTHDLGSMPSILETSEQYDPWIEWAYSWSSPDIHQSRIVVKMNEGRGDELCMRLIGPEYLPPLSPMTLFWNSSTTFTVTFKAAERVPLVPLSSVEDMRAITALYLKATSSRVCSAERDFMALFAPDLHHTELKGWLDTYEGSDPAMEVYSRGHNPLLMGVVRDHSRYGEPFLFRKWLVSHQNPSCSIVELECAPFPHRRNFLRRQTLANSQVDVDEAIPDSAAKNPIVAAEACTIDRLPFTMAIFGLFISAIVEQLEIELIATRLRDTILRDVSFKSTDHIITAISTPLAHRLTNYQRYEFLGDSILKFSVSCQLFFQHPNWHEGYLSEGRDMIVQNPRLAKAALDTGLDAYIVTKRLASRKWSAPLISEKLGRVPAKRQMSTKVLADVVEALIGAAYVDGGHSTAQACIRRFLPEINLHAVDTRTAARSVAPESARHMMNDRLKDHIGYTFEDESLLVEALTHPSCDYDSTTQSYQRLEYLGDAVLDMVIVSAIFNHRIQRPQGDMTKIKHAVVNANLLAFLCMEFAISEEKLDVAQTSKDSFAVTSSQESVELWRFMRYRGQGLKAARDASLARHRALRDEIASSLLQAPHYPWHALSRLNADKFFSDIIESVLGAIFVDSGGNLAPCEVFVEQIGLMAYLRRILDHGIDVRHPRSVVQQLAKTNIQFVLQRVPTEEGGASYQCSVQMEQAELFVVTGCLTAEEAEVTAAVEAIKFLTRDEGSTPLNKS.

Residues M23–A203 enclose the Helicase ATP-binding domain. Residue M36–T43 participates in ATP binding. The DEAH box signature appears at D144–H147. Positions K368–S537 constitute a Helicase C-terminal domain. The Dicer dsRNA-binding fold domain maps to A564–K658. RNase III domains lie at I906 to G1059 and N1098 to G1281. Positions 1137, 1267, and 1270 each coordinate Mg(2+).

This sequence belongs to the helicase family. Dicer subfamily. The cofactor is Mg(2+). Requires Mn(2+) as cofactor.

Dicer-like endonuclease involved in cleaving double-stranded RNA in the RNA interference (RNAi) pathway. Produces 21 to 25 bp dsRNAs (siRNAs) which target the selective destruction of homologous RNAs leading to sequence-specific suppression of gene expression, called post-transcriptional gene silencing (PTGS). Part of a broad host defense response against viral infection and transposons. In Aspergillus fumigatus (strain ATCC MYA-4609 / CBS 101355 / FGSC A1100 / Af293) (Neosartorya fumigata), this protein is Dicer-like protein 2 (dcl2).